The sequence spans 209 residues: Phosphopantothenoylcysteine decarboxylase (209 aa).

FMN contacts are provided by residues Gly-28–Val-30 and Thr-53–Ser-55. His-90 (proton donor) is an active-site residue. FMN contacts are provided by residues Ser-106–Thr-109 and Ala-140. N-[(R)-4-phosphopantothenoyl]-L-cysteine contacts are provided by Asn-142, Arg-172, and Ala-174. The active-site Proton donor is the Cys-175. Met-183 serves as a coordination point for N-[(R)-4-phosphopantothenoyl]-L-cysteine.

This sequence belongs to the HFCD (homooligomeric flavin containing Cys decarboxylase) superfamily. As to quaternary structure, homotrimer. FMN is required as a cofactor. In terms of tissue distribution, expressed in roots, shoots, leaves, flowers, developing siliques and seeds with highest expression in seed embryos and phloem.

It catalyses the reaction N-[(R)-4-phosphopantothenoyl]-L-cysteine + H(+) = (R)-4'-phosphopantetheine + CO2. It functions in the pathway cofactor biosynthesis; coenzyme A biosynthesis; CoA from (R)-pantothenate: step 3/5. Functionally, involved in plant growth, and salt and osmotic tolerance. Catalyzes the decarboxylation of 4'-phosphopantothenoylcysteine to 4'-phosphopantetheine, a key step in coenzyme A biosynthesis. The enzyme is also able to decarboxylate pantothenoylcysteine to pantothenoylcysteamine. The chain is Phosphopantothenoylcysteine decarboxylase from Arabidopsis thaliana (Mouse-ear cress).